The chain runs to 242 residues: Pyridoxine 5'-phosphate synthase (242 aa).

Asparagine 9 contacts 3-amino-2-oxopropyl phosphate. A 1-deoxy-D-xylulose 5-phosphate-binding site is contributed by 11–12; sequence DH. Arginine 20 lines the 3-amino-2-oxopropyl phosphate pocket. The active-site Proton acceptor is the histidine 45. Arginine 47 and histidine 52 together coordinate 1-deoxy-D-xylulose 5-phosphate. The active-site Proton acceptor is glutamate 72. 1-deoxy-D-xylulose 5-phosphate is bound at residue threonine 102. Histidine 193 acts as the Proton donor in catalysis. 3-amino-2-oxopropyl phosphate-binding positions include glycine 194 and 215–216; that span reads GH.

Belongs to the PNP synthase family. As to quaternary structure, homooctamer; tetramer of dimers.

It localises to the cytoplasm. It carries out the reaction 3-amino-2-oxopropyl phosphate + 1-deoxy-D-xylulose 5-phosphate = pyridoxine 5'-phosphate + phosphate + 2 H2O + H(+). It functions in the pathway cofactor biosynthesis; pyridoxine 5'-phosphate biosynthesis; pyridoxine 5'-phosphate from D-erythrose 4-phosphate: step 5/5. Catalyzes the complicated ring closure reaction between the two acyclic compounds 1-deoxy-D-xylulose-5-phosphate (DXP) and 3-amino-2-oxopropyl phosphate (1-amino-acetone-3-phosphate or AAP) to form pyridoxine 5'-phosphate (PNP) and inorganic phosphate. The polypeptide is Pyridoxine 5'-phosphate synthase (Idiomarina loihiensis (strain ATCC BAA-735 / DSM 15497 / L2-TR)).